The following is a 448-amino-acid chain: uncharacterized protein (448 aa).

Basic and acidic residues predominate over residues S187–G198. Disordered regions lie at residues S187–R221, L243–M270, and L291–G361. Residues L243–S261 show a composition bias toward low complexity. A compositionally biased stretch (basic and acidic residues) spans F307 to R334.

It to M.tuberculosis Rv0025 and Rv0739.

This is an uncharacterized protein from Mycobacterium tuberculosis (strain ATCC 25618 / H37Rv).